Here is a 598-residue protein sequence, read N- to C-terminus: Nuclear receptor subfamily 4immunitygroup A member 1 (598 aa).

Disordered stretches follow at residues 1-44 (MPCI…EAAP), 131-158 (YYGS…DGSF), 177-206 (LPKA…AQSP), and 221-265 (GESY…GSEG). Positions 134 to 145 (SPCSAPSPSTPS) are enriched in low complexity. The interval 171–466 (RAWTEQLPKA…PGEGKLIFCS (296 aa)) is required for nuclear import. Positions 264–339 (EGRCAVCGDN…VGMVKEVVRT (76 aa)) form a DNA-binding region, nuclear receptor. 2 consecutive NR C4-type zinc fingers follow at residues 267–287 (CAVC…CEGC) and 303–327 (CLAN…FQKC). A required for binding NBRE-containing DNA region spans residues 268–354 (AVCGDNASCQ…RRGRLPSKPK (87 aa)). Positions 299 to 361 (AKYICLANKD…KPKQPPDASP (63 aa)) are required for the interaction with RXRA. The residue at position 341 (Ser-341) is a Phosphoserine; by PKA. Positions 341–361 (SLKGRRGRLPSKPKQPPDASP) are disordered. Ser-351 bears the Phosphoserine mark. The region spanning 360–595 (SPANLLTSLV…PIIDKIFMDT (236 aa)) is the NR LBD domain. Residues 521–544 (PRRVEELQNRIASCLKEHVAAVAG) form a binds lipopolysaccharide region. Residues 584 to 595 (PPPIIDKIFMDT) form an AF-2 region.

It belongs to the nuclear hormone receptor family. NR4 subfamily. As to quaternary structure, binds the NGFI-B response element (NBRE) as a monomer. Binds the Nur response element (NurRE), consisting of two inverse NBRE-related octanucleotide repeats separated by 6 base-pairs, as a dimer. Interacts (via N-terminus) with NLRP3 (via LRR repeat domain); the interaction is direct, requires binding of NR4A1/Nur77 to NBRE-containing dsDNA and lipopolysaccharide, and leads to non-canonical NLRP3 inflammasome activation. Interacts with GADD45GIP1. Interacts with STK11. Interacts with IFI27. Heterodimer (via DNA-binding domain) with RXRA (via C-terminus); DNA-binding of the heterodimer is enhanced by 9-cis retinoic acid. Competes for the RXRA interaction with EP300 and thereby attenuates EP300 mediated acetylation of RXRA. Interacts with NCOA1. Interacts with NCOA2. Interacts with NCOA3. Requires Zn(2+) as cofactor. In terms of processing, phosphorylated at Ser-351 by RPS6KA1 and RPS6KA3 in response to mitogenic or stress stimuli. Acetylated by p300/CBP, acetylation increases stability. Deacetylated by HDAC1. In terms of tissue distribution, fetal muscle and adult liver, brain and thyroid.

It localises to the nucleus. Its subcellular location is the cytoplasm. The protein resides in the cytosol. It is found in the mitochondrion. Its transcription factor activity is activated by binding cytosporone B (Csn-B) via its ligand-binding (NR LBD) domain and stimulates recruitment of coactivators NCOA1 and NCOA2, but not NCOA3, to promoters. Csn-B-binding is also accompanied by its translocation to the mitochondrion. Its transcription factor activity is activated by corticotropin-releasing hormone (CRH) and forskolin. Not activated by binding cytosporone C (Csn-C). Orphan nuclear receptor. Binds the NGFI-B response element (NBRE) 5'-AAAGGTCA-3'. Binds 9-cis-retinoic acid outside of its ligand-binding (NR LBD) domain. Participates in energy homeostasis by sequestrating the kinase STK11 in the nucleus, thereby attenuating cytoplasmic AMPK activation. Regulates the inflammatory response in macrophages by regulating metabolic adaptations during inflammation, including repressing the transcription of genes involved in the citric acid cycle (TCA). Inhibits NF-kappa-B signaling by binding to low-affinity NF-kappa-B binding sites, such as at the IL2 promoter. May act concomitantly with NR4A2 in regulating the expression of delayed-early genes during liver regeneration. Plays a role in the vascular response to injury. Functionally, in the cytosol, upon its detection of both bacterial lipopolysaccharide (LPS) and NBRE-containing mitochondrial DNA released by GSDMD pores during pyroptosis, it promotes non-canonical NLRP3 inflammasome activation by stimulating association of NLRP3 and NEK7. This Homo sapiens (Human) protein is Nuclear receptor subfamily 4immunitygroup A member 1 (NR4A1).